The sequence spans 271 residues: MPLSSQPAILIIGGAEDKVHGREILQTFWSRSGGNDAIIGIIPSASREPLLIGERYQTIFSDMGVKELKVLDIRDRAQGDDSGYRLFVEQCTGIFMTGGDQLRLCGLLADTPLMDRIRQRVHNGEISLAGTSAGAAVMGHHMIAGGSSGEWPNRALVDMAVGLGIVPEIVVDQHFHNRNRMARLLSAISTHPELLGLGIDEDTCAMFERDGSVKVIGQGTVSFVDARDMSYTNAALVGANAPLSLHNLRLNILVHGEVYHQVKQRAFPRVT.

Residues serine 132, histidine 174, and glutamate 201 each act as charge relay system in the active site.

It belongs to the peptidase S51 family. As to quaternary structure, homodimer.

It catalyses the reaction [L-4-(L-arginin-2-N-yl)aspartate](n) + H2O = [L-4-(L-arginin-2-N-yl)aspartate](n-1) + L-4-(L-arginin-2-N-yl)aspartate. Functionally, exopeptidase that catalyzes the hydrolytic cleavage of multi-L-arginyl-poly-L-aspartic acid (cyanophycin; a water-insoluble reserve polymer) into aspartate-arginine dipeptides. The sequence is that of Cyanophycinase (cphB) from Synechocystis sp. (strain ATCC 27184 / PCC 6803 / Kazusa).